A 275-amino-acid chain; its full sequence is Putative carbamate hydrolase RutD (275 aa).

Belongs to the AB hydrolase superfamily. Hydrolase RutD family.

The catalysed reaction is carbamate + 2 H(+) = NH4(+) + CO2. Involved in pyrimidine catabolism. May facilitate the hydrolysis of carbamate, a reaction that can also occur spontaneously. The protein is Putative carbamate hydrolase RutD of Escherichia coli (strain UTI89 / UPEC).